The primary structure comprises 345 residues: 4-hydroxy-2-oxovalerate aldolase (345 aa).

The Pyruvate carboxyltransferase domain maps to 8–260 (ITVHDMTLRD…ETGVDVFKIQ (253 aa)). Residue 16-17 (RD) participates in substrate binding. D17 contributes to the Mn(2+) binding site. The active-site Proton acceptor is the H20. The substrate site is built by S170 and H199. Positions 199 and 201 each coordinate Mn(2+). Y290 contacts substrate.

It belongs to the 4-hydroxy-2-oxovalerate aldolase family.

It catalyses the reaction (S)-4-hydroxy-2-oxopentanoate = acetaldehyde + pyruvate. This is 4-hydroxy-2-oxovalerate aldolase from Leptothrix cholodnii (strain ATCC 51168 / LMG 8142 / SP-6) (Leptothrix discophora (strain SP-6)).